The following is a 313-amino-acid chain: Acetyl-coenzyme A carboxylase carboxyl transferase subunit alpha (313 aa).

Residues 30–291 (DLDREISDLE…KMALLQELAF (262 aa)) form the CoA carboxyltransferase C-terminal domain.

The protein belongs to the AccA family. Acetyl-CoA carboxylase is a heterohexamer composed of biotin carboxyl carrier protein (AccB), biotin carboxylase (AccC) and two subunits each of ACCase subunit alpha (AccA) and ACCase subunit beta (AccD).

The protein localises to the cytoplasm. The enzyme catalyses N(6)-carboxybiotinyl-L-lysyl-[protein] + acetyl-CoA = N(6)-biotinyl-L-lysyl-[protein] + malonyl-CoA. It functions in the pathway lipid metabolism; malonyl-CoA biosynthesis; malonyl-CoA from acetyl-CoA: step 1/1. Functionally, component of the acetyl coenzyme A carboxylase (ACC) complex. First, biotin carboxylase catalyzes the carboxylation of biotin on its carrier protein (BCCP) and then the CO(2) group is transferred by the carboxyltransferase to acetyl-CoA to form malonyl-CoA. In Zymomonas mobilis subsp. mobilis (strain ATCC 31821 / ZM4 / CP4), this protein is Acetyl-coenzyme A carboxylase carboxyl transferase subunit alpha.